The following is a 476-amino-acid chain: UDP-N-acetylmuramate--L-alanine ligase (476 aa).

125-131 (GTHGKTT) lines the ATP pocket.

This sequence belongs to the MurCDEF family.

The protein localises to the cytoplasm. The catalysed reaction is UDP-N-acetyl-alpha-D-muramate + L-alanine + ATP = UDP-N-acetyl-alpha-D-muramoyl-L-alanine + ADP + phosphate + H(+). The protein operates within cell wall biogenesis; peptidoglycan biosynthesis. Functionally, cell wall formation. The protein is UDP-N-acetylmuramate--L-alanine ligase of Histophilus somni (strain 129Pt) (Haemophilus somnus).